Consider the following 207-residue polypeptide: Ribosomal RNA small subunit methyltransferase G (207 aa).

S-adenosyl-L-methionine is bound by residues G73, L78, 124 to 125 (VE), and R139.

This sequence belongs to the methyltransferase superfamily. RNA methyltransferase RsmG family.

Its subcellular location is the cytoplasm. It carries out the reaction guanosine(527) in 16S rRNA + S-adenosyl-L-methionine = N(7)-methylguanosine(527) in 16S rRNA + S-adenosyl-L-homocysteine. In terms of biological role, specifically methylates the N7 position of guanine in position 527 of 16S rRNA. This is Ribosomal RNA small subunit methyltransferase G from Salmonella schwarzengrund (strain CVM19633).